The following is a 242-amino-acid chain: Small ribosomal subunit protein uS7m (242 aa).

A mitochondrion-targeting transit peptide spans 1-37; that stretch reads MAAPALRAPLRWSGLALGVRCAVWNLPGLTQVRGSRY. Position 228 is an N6-acetyllysine (K228).

Belongs to the universal ribosomal protein uS7 family. As to quaternary structure, component of the mitochondrial ribosome small subunit (28S) which comprises a 12S rRNA and about 30 distinct proteins.

It localises to the mitochondrion. This Mus musculus (Mouse) protein is Small ribosomal subunit protein uS7m (Mrps7).